The chain runs to 471 residues: Heat shock 70 kDa protein 13 (471 aa).

The N-terminal stretch at 1-22 (MAREMTILGSAVLTLLLAGYLA) is a signal peptide. Residues 315–341 (EQDRKEPHSSDTELPKDKLSSADDHRV) show a composition bias toward basic and acidic residues. The tract at residues 315–352 (EQDRKEPHSSDTELPKDKLSSADDHRVNSGFGRGLSDK) is disordered.

It belongs to the heat shock protein 70 family. In terms of assembly, binds UBQLN2. As to expression, constitutively expressed in all tissues.

It is found in the microsome. The protein resides in the endoplasmic reticulum. Has peptide-independent ATPase activity. The protein is Heat shock 70 kDa protein 13 (HSPA13) of Homo sapiens (Human).